Consider the following 313-residue polypeptide: Putative S-adenosyl-L-methionine-dependent methyltransferase MAV_5149 (313 aa).

S-adenosyl-L-methionine is bound by residues Asp-135 and 164 to 165 (DL).

It belongs to the UPF0677 family.

Functionally, exhibits S-adenosyl-L-methionine-dependent methyltransferase activity. This chain is Putative S-adenosyl-L-methionine-dependent methyltransferase MAV_5149, found in Mycobacterium avium (strain 104).